The primary structure comprises 152 residues: Superoxide dismutase [Cu-Zn] 5 (152 aa).

Residues His-44, His-46, and His-61 each coordinate Cu cation. Cys-55 and Cys-144 are disulfide-bonded. Zn(2+)-binding residues include His-61, His-69, His-78, and Asp-81. Residue His-118 participates in Cu cation binding.

It belongs to the Cu-Zn superoxide dismutase family. Cu cation serves as cofactor. Zn(2+) is required as a cofactor.

It catalyses the reaction 2 superoxide + 2 H(+) = H2O2 + O2. Destroys radicals which are normally produced within the cells and which are toxic to biological systems. The chain is Superoxide dismutase [Cu-Zn] 5 (sodE) from Dictyostelium discoideum (Social amoeba).